The chain runs to 135 residues: Putative pre-16S rRNA nuclease (135 aa).

The protein belongs to the YqgF nuclease family.

Its subcellular location is the cytoplasm. Its function is as follows. Could be a nuclease involved in processing of the 5'-end of pre-16S rRNA. The chain is Putative pre-16S rRNA nuclease from Maridesulfovibrio salexigens (strain ATCC 14822 / DSM 2638 / NCIMB 8403 / VKM B-1763) (Desulfovibrio salexigens).